The chain runs to 673 residues: DNA ligase (673 aa).

NAD(+) is bound by residues 34-38 (DAEYD), 83-84 (SL), and Glu-116. Lys-118 functions as the N6-AMP-lysine intermediate in the catalytic mechanism. Arg-139, Glu-176, Lys-293, and Lys-317 together coordinate NAD(+). 4 residues coordinate Zn(2+): Cys-411, Cys-414, Cys-429, and Cys-435. Positions 595 to 673 (NQQNPFFGKT…EDEFLKWVNS (79 aa)) constitute a BRCT domain.

The protein belongs to the NAD-dependent DNA ligase family. LigA subfamily. It depends on Mg(2+) as a cofactor. Mn(2+) serves as cofactor.

The catalysed reaction is NAD(+) + (deoxyribonucleotide)n-3'-hydroxyl + 5'-phospho-(deoxyribonucleotide)m = (deoxyribonucleotide)n+m + AMP + beta-nicotinamide D-nucleotide.. In terms of biological role, DNA ligase that catalyzes the formation of phosphodiester linkages between 5'-phosphoryl and 3'-hydroxyl groups in double-stranded DNA using NAD as a coenzyme and as the energy source for the reaction. It is essential for DNA replication and repair of damaged DNA. This is DNA ligase from Legionella pneumophila (strain Lens).